The sequence spans 282 residues: Probable endonuclease 4 (282 aa).

9 residues coordinate Zn(2+): histidine 69, histidine 109, glutamate 145, aspartate 179, histidine 182, histidine 216, aspartate 229, histidine 231, and glutamate 261.

Belongs to the AP endonuclease 2 family. Zn(2+) serves as cofactor.

It carries out the reaction Endonucleolytic cleavage to 5'-phosphooligonucleotide end-products.. Functionally, endonuclease IV plays a role in DNA repair. It cleaves phosphodiester bonds at apurinic or apyrimidinic (AP) sites, generating a 3'-hydroxyl group and a 5'-terminal sugar phosphate. The polypeptide is Probable endonuclease 4 (Magnetococcus marinus (strain ATCC BAA-1437 / JCM 17883 / MC-1)).